The following is a 254-amino-acid chain: Phosphatidylglycerophosphatase B (254 aa).

The chain crosses the membrane as a helical span at residues 2 to 24; that stretch reads RSIARRTAVGAALLLVMPVAVWI. Residues 25–54 are Periplasmic-facing; that stretch reads SGWRWQPGEQSWLLKAAFWVTETVTQPWGV. Residues 55–66 form a helical membrane-spanning segment; sequence ITHLILFGWFLW. Over 67 to 71 the chain is Cytoplasmic; sequence CLRFR. Residues 72–94 traverse the membrane as a helical segment; it reads IKAAFVLFAILAAAILVGQGVKS. The Periplasmic segment spans residues 95–161; that stretch reads WIKDKVQEPR…QKETGFAFPS (67 aa). The tract at residues 97–105 is phosphatase sequence motif I; it reads KDKVQEPRP. Positions 160–163 are phosphatase sequence motif II; that stretch reads PSGH. Residues 162-176 traverse the membrane as a helical segment; the sequence is GHTMFAASWALLAVG. The active-site Proton donor; for a subset of substrates is the His-163. Residues 177 to 182 are Cytoplasmic-facing; that stretch reads LLWPRR. A helical transmembrane segment spans residues 183-202; the sequence is RTLTIAILLVWATGVMGSRL. Residues 200 to 211 form a phosphatase sequence motif III region; the sequence is SRLLLGMHWPRD. At 203-208 the chain is on the periplasmic side; the sequence is LLGMHW. His-207 acts as the Nucleophile in catalysis. The helical transmembrane segment at 209 to 232 threads the bilayer; the sequence is PRDLVVATLISWALVAVATWLAQR. Over 233–254 the chain is Cytoplasmic; sequence ICGPLTPPAEENREIAQREQES.

This sequence belongs to the PA-phosphatase related phosphoesterase family. The N-terminus is blocked.

It is found in the cell inner membrane. The protein localises to the cell outer membrane. It catalyses the reaction a 1,2-diacyl-sn-glycero-3-phospho-(1'-sn-glycero-3'-phosphate) + H2O = a 1,2-diacyl-sn-glycero-3-phospho-(1'-sn-glycerol) + phosphate. The catalysed reaction is a 1,2-diacyl-sn-glycerol 3-diphosphate + H2O = a 1,2-diacyl-sn-glycero-3-phosphate + phosphate + H(+). It carries out the reaction a 1,2-diacyl-sn-glycero-3-phosphate + H2O = a 1,2-diacyl-sn-glycerol + phosphate. The enzyme catalyses di-trans,octa-cis-undecaprenyl diphosphate + H2O = di-trans,octa-cis-undecaprenyl phosphate + phosphate + H(+). The protein operates within phospholipid metabolism; phosphatidylglycerol biosynthesis; phosphatidylglycerol from CDP-diacylglycerol: step 2/2. Catalyzes the dephosphorylation of diacylglycerol diphosphate (DGPP) to phosphatidate (PA) and the subsequent dephosphorylation of PA to diacylglycerol (DAG). Also has undecaprenyl pyrophosphate phosphatase activity, required for the biosynthesis of the lipid carrier undecaprenyl phosphate. Can also use lysophosphatidic acid (LPA) and phosphatidylglycerophosphate as substrates. The pattern of activities varies according to subcellular location, PGP phosphatase activity is higher in the cytoplasmic membrane, whereas PA and LPA phosphatase activities are higher in the outer membrane. Activity is independent of a divalent cation ion and insensitive to inhibition by N-ethylmaleimide. The chain is Phosphatidylglycerophosphatase B (pgpB) from Escherichia coli O157:H7.